We begin with the raw amino-acid sequence, 159 residues long: Endoribonuclease YbeY (159 aa).

Zn(2+) is bound by residues His-119, His-123, and His-129.

Belongs to the endoribonuclease YbeY family. Zn(2+) serves as cofactor.

The protein localises to the cytoplasm. Functionally, single strand-specific metallo-endoribonuclease involved in late-stage 70S ribosome quality control and in maturation of the 3' terminus of the 16S rRNA. This chain is Endoribonuclease YbeY, found in Acinetobacter baylyi (strain ATCC 33305 / BD413 / ADP1).